A 243-amino-acid polypeptide reads, in one-letter code: Interleukin-27 subunit alpha (243 aa).

The first 28 residues, 1 to 28 (MGQTAGDLGWRLSLLLLPLLLVQAGVWG), serve as a signal peptide directing secretion.

The protein belongs to the IL-6 superfamily. Heterodimer with EBI3; not disulfide-linked. This heterodimer is known as interleukin IL-27. O-glycosylated. In terms of tissue distribution, expressed in monocytes and in placenta.

Its subcellular location is the secreted. Functionally, associates with EBI3 to form the IL-27 interleukin, a heterodimeric cytokine which functions in innate immunity. IL-27 has pro- and anti-inflammatory properties, that can regulate T-helper cell development, suppress T-cell proliferation, stimulate cytotoxic T-cell activity, induce isotype switching in B-cells, and that has diverse effects on innate immune cells. Among its target cells are CD4 T-helper cells which can differentiate in type 1 effector cells (TH1), type 2 effector cells (TH2) and IL17 producing helper T-cells (TH17). It drives rapid clonal expansion of naive but not memory CD4 T-cells. It also strongly synergizes with IL-12 to trigger interferon-gamma/IFN-gamma production of naive CD4 T-cells, binds to the cytokine receptor WSX-1/TCCR which appears to be required but not sufficient for IL-27-mediated signal transduction. IL-27 potentiate the early phase of TH1 response and suppress TH2 and TH17 differentiation. It induces the differentiation of TH1 cells via two distinct pathways, p38 MAPK/TBX21- and ICAM1/ITGAL/ERK-dependent pathways. It also induces STAT1, STAT3, STAT4 and STAT5 phosphorylation and activates TBX21/T-Bet via STAT1 with resulting IL12RB2 up-regulation, an event crucial to TH1 cell commitment. It suppresses the expression of GATA3, the inhibitor TH1 cells development. In CD8 T-cells, it activates STATs as well as GZMB. IL-27 reveals to be a potent inhibitor of TH17 cell development and of IL-17 production. Indeed IL27 alone is also able to inhibit the production of IL17 by CD4 and CD8 T-cells. While IL-27 suppressed the development of pro-inflammatory Th17 cells via STAT1, it inhibits the development of anti-inflammatory inducible regulatory T-cells, iTreg, independently of STAT1. IL-27 also has an effect on cytokine production, it suppresses pro-inflammatory cytokine production such as IL2, IL4, IL5 and IL6 and activates suppressors of cytokine signaling such as SOCS1 and SOCS3. Apart from suppression of cytokine production, IL-27 also antagonizes the effects of some cytokines such as IL6 through direct effects on T-cells. Another important role of IL-27 is its antitumor activity as well as its antiangiogenic activity with activation of production of antiangiogenic chemokines such as IP-10/CXCL10 and MIG/CXCL9. In vein endothelial cells, it induces IRF1/interferon regulatory factor 1 and increase the expression of MHC class II transactivator/CIITA with resulting up-regulation of major histocompatibility complex class II. IL-27 also demonstrates antiviral activity with inhibitory properties on HIV-1 replication. This chain is Interleukin-27 subunit alpha (IL27), found in Homo sapiens (Human).